The primary structure comprises 582 residues: Protein bps2 (582 aa).

Residue 28 to 35 (APNAYGKT) coordinates ATP. Positions 243–281 (RQSYERQLQEINAQLQKITAQRNEAEIEIRLLEKVLDQI) form a coiled coil. A Zinc-hook domain is found at 243–351 (RQSYERQLQE…KLKELDQISS (109 aa)). Zn(2+)-binding residues include Cys292 and Cys295. Residues 320–351 (SLYAGIKKEADELLSKKSEIEKKLKELDQISS) are a coiled coil.

The chain is Protein bps2 (bps2) from Acidianus ambivalens (Desulfurolobus ambivalens).